A 511-amino-acid chain; its full sequence is ATP synthase subunit alpha (511 aa).

169–176 (GDRQTGKT) is an ATP binding site.

It belongs to the ATPase alpha/beta chains family. As to quaternary structure, F-type ATPases have 2 components, CF(1) - the catalytic core - and CF(0) - the membrane proton channel. CF(1) has five subunits: alpha(3), beta(3), gamma(1), delta(1), epsilon(1). CF(0) has three main subunits: a(1), b(2) and c(9-12). The alpha and beta chains form an alternating ring which encloses part of the gamma chain. CF(1) is attached to CF(0) by a central stalk formed by the gamma and epsilon chains, while a peripheral stalk is formed by the delta and b chains.

It localises to the cell inner membrane. It catalyses the reaction ATP + H2O + 4 H(+)(in) = ADP + phosphate + 5 H(+)(out). In terms of biological role, produces ATP from ADP in the presence of a proton gradient across the membrane. The alpha chain is a regulatory subunit. This chain is ATP synthase subunit alpha, found in Bartonella tribocorum (strain CIP 105476 / IBS 506).